The sequence spans 236 residues: Cutinase (236 aa).

Residues M1–A20 form the signal peptide. A disulfide bridge links C66 with C143. S154 serves as the catalytic Nucleophile. A disulfide bridge connects residues C202 and C209. The active site involves D206. Residue H218 is the Proton donor/acceptor of the active site.

This sequence belongs to the cutinase family. Post-translationally, the 2 disulfide bonds play a critical role in holding the catalytic residues in juxta-position; reduction of the disulfide bridges results in the complete inactivation of the enzyme.

The protein resides in the secreted. It carries out the reaction cutin + H2O = cutin monomers.. Catalyzes the hydrolysis of complex carboxylic polyesters found in the cell wall of plants. Degrades cutin, a macromolecule that forms the structure of the plant cuticle. Allows pathogenic fungi to penetrate through the cuticular barrier into the host plant during the initial stage of fungal infection. This Blumeria hordei (Barley powdery mildew) protein is Cutinase (CUT1).